We begin with the raw amino-acid sequence, 155 residues long: Small ribosomal subunit protein uS7cz/uS7cy (155 aa).

Belongs to the universal ribosomal protein uS7 family. Part of the 30S ribosomal subunit.

The protein resides in the plastid. It is found in the chloroplast. One of the primary rRNA binding proteins, it binds directly to 16S rRNA where it nucleates assembly of the head domain of the 30S subunit. The polypeptide is Small ribosomal subunit protein uS7cz/uS7cy (rps7-A) (Phaseolus vulgaris (Kidney bean)).